The sequence spans 406 residues: Probable 4-hydroxyphenylpyruvate dioxygenase 2 (406 aa).

VOC domains are found at residues 22–174 (GFDH…LINR) and 205–363 (EIDH…IFSK). Fe cation-binding residues include H208, H291, and E374.

Belongs to the 4HPPD family. It depends on Fe cation as a cofactor.

It catalyses the reaction 3-(4-hydroxyphenyl)pyruvate + O2 = homogentisate + CO2. The protein operates within amino-acid degradation; L-phenylalanine degradation; acetoacetate and fumarate from L-phenylalanine: step 3/6. The protein is Probable 4-hydroxyphenylpyruvate dioxygenase 2 of Aspergillus fumigatus (strain ATCC MYA-4609 / CBS 101355 / FGSC A1100 / Af293) (Neosartorya fumigata).